A 375-amino-acid chain; its full sequence is Anhydro-N-acetylmuramic acid kinase (375 aa).

19 to 26 is an ATP binding site; sequence GTSLDGVD.

It belongs to the anhydro-N-acetylmuramic acid kinase family.

The catalysed reaction is 1,6-anhydro-N-acetyl-beta-muramate + ATP + H2O = N-acetyl-D-muramate 6-phosphate + ADP + H(+). It participates in amino-sugar metabolism; 1,6-anhydro-N-acetylmuramate degradation. The protein operates within cell wall biogenesis; peptidoglycan recycling. Functionally, catalyzes the specific phosphorylation of 1,6-anhydro-N-acetylmuramic acid (anhMurNAc) with the simultaneous cleavage of the 1,6-anhydro ring, generating MurNAc-6-P. Is required for the utilization of anhMurNAc either imported from the medium or derived from its own cell wall murein, and thus plays a role in cell wall recycling. The polypeptide is Anhydro-N-acetylmuramic acid kinase (Ruegeria sp. (strain TM1040) (Silicibacter sp.)).